The primary structure comprises 615 residues: DNA mismatch repair protein MutL (615 aa).

The segment at 363 to 397 is disordered; the sequence is FAEPAAREPVAPRYTPAPASGSRPAAPWPNAQPGY. Residues 364–391 show a composition bias toward low complexity; sequence AEPAAREPVAPRYTPAPASGSRPAAPWP.

This sequence belongs to the DNA mismatch repair MutL/HexB family.

Its function is as follows. This protein is involved in the repair of mismatches in DNA. It is required for dam-dependent methyl-directed DNA mismatch repair. May act as a 'molecular matchmaker', a protein that promotes the formation of a stable complex between two or more DNA-binding proteins in an ATP-dependent manner without itself being part of a final effector complex. The protein is DNA mismatch repair protein MutL of Escherichia coli O8 (strain IAI1).